Reading from the N-terminus, the 412-residue chain is Maintenance of mitochondrial morphology protein 1 (412 aa).

Residues 1 to 19 (MAQDVCPTRSEPSLSFLQG) are Lumenal-facing. A helical transmembrane segment spans residues 20–40 (LILGQLSVVLLIAAFIKFFIF). The Cytoplasmic portion of the chain corresponds to 41 to 412 (GEAPSAEETA…GSLPGIDMPT (372 aa)). The region spanning 121-337 (QPESLDWFNV…EPRFQEIELP (217 aa)) is the SMP-LTD domain. Residues 372 to 384 (ARQELDTETDGLR) show a composition bias toward basic and acidic residues. The tract at residues 372–412 (ARQELDTETDGLRYRRRPVGDDTYSVSGSMPGSLPGIDMPT) is disordered.

The protein belongs to the MMM1 family. As to quaternary structure, homodimer. Component of the ER-mitochondria encounter structure (ERMES) or MDM complex, composed of MMM1, MDM10, MDM12 and MDM34. An MMM1 homodimer associates with one molecule of MDM12 on each side in a pairwise head-to-tail manner, and the SMP-LTD domains of MMM1 and MDM12 generate a continuous hydrophobic tunnel for phospholipid trafficking.

The protein resides in the endoplasmic reticulum membrane. Component of the ERMES/MDM complex, which serves as a molecular tether to connect the endoplasmic reticulum (ER) and mitochondria. Components of this complex are involved in the control of mitochondrial shape and protein biogenesis, and function in nonvesicular lipid trafficking between the ER and mitochondria. The MDM12-MMM1 subcomplex functions in the major beta-barrel assembly pathway that is responsible for biogenesis of all outer membrane beta-barrel proteins, and acts in a late step after the SAM complex. The MDM10-MDM12-MMM1 subcomplex further acts in the TOM40-specific pathway after the action of the MDM12-MMM1 complex. Essential for establishing and maintaining the structure of mitochondria and maintenance of mtDNA nucleoids. In Podospora anserina (strain S / ATCC MYA-4624 / DSM 980 / FGSC 10383) (Pleurage anserina), this protein is Maintenance of mitochondrial morphology protein 1.